Here is a 713-residue protein sequence, read N- to C-terminus: Zinc finger and BTB domain-containing protein 1 (713 aa).

Lys3 is covalently cross-linked (Glycyl lysine isopeptide (Lys-Gly) (interchain with G-Cter in SUMO2)). Residues 24 to 91 enclose the BTB domain; it reads CDCCIAIDDI…MYLGKIMTAP (68 aa). Glycyl lysine isopeptide (Lys-Gly) (interchain with G-Cter in SUMO2) cross-links involve residues Lys200 and Lys205. The C2H2-type 1; atypical zinc finger occupies 216-242; it reads FTCDSCGFGFSCEKLLDEHVLTCTNRH. Glycyl lysine isopeptide (Lys-Gly) (interchain with G-Cter in SUMO2) cross-links involve residues Lys261, Lys266, Lys276, Lys284, Lys304, Lys316, Lys328, Lys340, and Lys346. Residues 270–319 are disordered; sequence AEKDSSKTFSAQPDKYREDANQAPDDSASTTGSRKSTVEAGIAGEEKSRA. Phosphoserine is present on Ser355. Residue Thr356 is modified to Phosphothreonine. Lys381 is covalently cross-linked (Glycyl lysine isopeptide (Lys-Gly) (interchain with G-Cter in SUMO2)). A C2H2-type 2; atypical zinc finger spans residues 448–470; sequence CACGKCGQILVKGRQLQEHAQRC. Lys528 is covalently cross-linked (Glycyl lysine isopeptide (Lys-Gly) (interchain with G-Cter in SUMO2)). The segment at 533–558 adopts a UBZ-type zinc-finger fold; that stretch reads PFRCPNCGQRFETENLVVEHMSSCLD. A Glycyl lysine isopeptide (Lys-Gly) (interchain with G-Cter in SUMO2) cross-link involves residue Lys563. 5 C2H2-type zinc fingers span residues 578 to 600, 606 to 628, 634 to 656, 662 to 684, and 686 to 709; these read HFCN…YTVH, FVCQ…NDMH, YVCS…MISH, TICQ…MDVH, and YTCG…NAKH.

In terms of assembly, homodimer. Homodimer. Interacts (via BTB domain) with TRIM28 (unphosphorylated or phosphorylated form). Sumoylated with SUMO2 at Lys-328 and to a lesser extent at Lys-266. Sumoylation inhibits its transcriptional repression activity and regulates its subcellular localization. As to expression, expressed strongly in thymus and spleen, less in lymph nodes and peripheral blood mononuclear cells (PBMCs) and weakly in bone marrow. Strongly expressed in immature, but weakly in mature bone marrow-lymphocyte B.

The protein resides in the nucleus. Its subcellular location is the nucleoplasm. Its function is as follows. Acts as a transcriptional repressor. Represses cAMP-responsive element (CRE)-mediated transcriptional activation. In addition, has a role in translesion DNA synthesis. Requires for UV-inducible RAD18 loading, PCNA monoubiquitination, POLH recruitment to replication factories and efficient translesion DNA synthesis. Plays a key role in the transcriptional regulation of T lymphocyte development. This is Zinc finger and BTB domain-containing protein 1 (Zbtb1) from Mus musculus (Mouse).